Here is a 572-residue protein sequence, read N- to C-terminus: Urease subunit alpha (572 aa).

Residues 130-572 form the Urease domain; it reads GGVDTHIHFI…LPMAQRYFLF (443 aa). Residues H135, H137, and K218 each coordinate Ni(2+). Residue K218 is modified to N6-carboxylysine. Residue H220 coordinates substrate. Ni(2+) contacts are provided by H247 and H273. H321 (proton donor) is an active-site residue. D361 is a binding site for Ni(2+).

The protein belongs to the metallo-dependent hydrolases superfamily. Urease alpha subunit family. In terms of assembly, heterotrimer of UreA (gamma), UreB (beta) and UreC (alpha) subunits. Three heterotrimers associate to form the active enzyme. Ni cation serves as cofactor. In terms of processing, carboxylation allows a single lysine to coordinate two nickel ions.

It is found in the cytoplasm. It catalyses the reaction urea + 2 H2O + H(+) = hydrogencarbonate + 2 NH4(+). The protein operates within nitrogen metabolism; urea degradation; CO(2) and NH(3) from urea (urease route): step 1/1. The polypeptide is Urease subunit alpha (Ralstonia nicotianae (strain ATCC BAA-1114 / GMI1000) (Ralstonia solanacearum)).